The chain runs to 540 residues: Glucose-6-phosphate isomerase (540 aa).

The Proton donor role is filled by Glu350. Active-site residues include His381 and Lys503.

It belongs to the GPI family.

It localises to the cytoplasm. The enzyme catalyses alpha-D-glucose 6-phosphate = beta-D-fructose 6-phosphate. It functions in the pathway carbohydrate biosynthesis; gluconeogenesis. The protein operates within carbohydrate degradation; glycolysis; D-glyceraldehyde 3-phosphate and glycerone phosphate from D-glucose: step 2/4. Functionally, catalyzes the reversible isomerization of glucose-6-phosphate to fructose-6-phosphate. This Burkholderia pseudomallei (strain 1710b) protein is Glucose-6-phosphate isomerase.